Consider the following 1183-residue polypeptide: DNA-directed RNA polymerase subunit beta (1183 aa).

This sequence belongs to the RNA polymerase beta chain family. As to quaternary structure, the RNAP catalytic core consists of 2 alpha, 1 beta, 1 beta' and 1 omega subunit. When a sigma factor is associated with the core the holoenzyme is formed, which can initiate transcription.

The enzyme catalyses RNA(n) + a ribonucleoside 5'-triphosphate = RNA(n+1) + diphosphate. Functionally, DNA-dependent RNA polymerase catalyzes the transcription of DNA into RNA using the four ribonucleoside triphosphates as substrates. This is DNA-directed RNA polymerase subunit beta from Staphylococcus aureus (strain Mu3 / ATCC 700698).